The following is a 608-amino-acid chain: Probable methyltransferase PMT3 (608 aa).

Topologically, residues 1–12 are cytoplasmic; sequence MKGRSDGGQKKR. A helical; Signal-anchor for type II membrane protein transmembrane segment spans residues 13 to 33; it reads VIALVCVAAVVLVFVYLFYGS. Over 34-608 the chain is Lumenal; that stretch reads SDHRASAIEY…LTSESLRDME (575 aa). Residue Asn-342 is glycosylated (N-linked (GlcNAc...) asparagine).

The protein belongs to the methyltransferase superfamily.

It localises to the golgi apparatus membrane. The polypeptide is Probable methyltransferase PMT3 (Arabidopsis thaliana (Mouse-ear cress)).